A 486-amino-acid polypeptide reads, in one-letter code: Glutamate--tRNA ligase 1 (486 aa).

Residues Pro-9–Gly-19 carry the 'HIGH' region motif. The 'KMSKS' region motif lies at Lys-259–Arg-263. ATP is bound at residue Lys-262.

The protein belongs to the class-I aminoacyl-tRNA synthetase family. Glutamate--tRNA ligase type 1 subfamily. As to quaternary structure, monomer.

It localises to the cytoplasm. It carries out the reaction tRNA(Glu) + L-glutamate + ATP = L-glutamyl-tRNA(Glu) + AMP + diphosphate. In terms of biological role, catalyzes the attachment of glutamate to tRNA(Glu) in a two-step reaction: glutamate is first activated by ATP to form Glu-AMP and then transferred to the acceptor end of tRNA(Glu). The polypeptide is Glutamate--tRNA ligase 1 (Hyphomonas neptunium (strain ATCC 15444)).